The chain runs to 446 residues: Butyryl-CoA:acetate CoA-transferase (446 aa).

Residue 220-224 (GIGGM) participates in CoA binding. Residue E245 is the 5-glutamyl coenzyme A thioester intermediate of the active site. CoA is bound by residues V320, G343, and K370.

This sequence belongs to the acetyl-CoA hydrolase/transferase family. Butyryl-CoA CoA-transferase subfamily.

It carries out the reaction butanoate + acetyl-CoA = butanoyl-CoA + acetate. The enzyme catalyses propanoate + acetyl-CoA = propanoyl-CoA + acetate. Its pathway is lipid metabolism; butanoate metabolism. Its function is as follows. Coenzyme A-transferase that converts butyryl-CoA to butyrate. Can also use proprionyl-CoA as substrate in vitro. The protein is Butyryl-CoA:acetate CoA-transferase of Anaerostipes caccae (strain DSM 14662 / CCUG 47493 / JCM 13470 / NCIMB 13811 / L1-92).